The chain runs to 141 residues: Large ribosomal subunit protein uL11 (141 aa).

The protein belongs to the universal ribosomal protein uL11 family. Part of the ribosomal stalk of the 50S ribosomal subunit. Interacts with L10 and the large rRNA to form the base of the stalk. L10 forms an elongated spine to which L12 dimers bind in a sequential fashion forming a multimeric L10(L12)X complex. One or more lysine residues are methylated.

Its function is as follows. Forms part of the ribosomal stalk which helps the ribosome interact with GTP-bound translation factors. The protein is Large ribosomal subunit protein uL11 of Streptococcus agalactiae serotype III (strain NEM316).